The sequence spans 62 residues: Photosystem II reaction center protein Z (62 aa).

2 helical membrane passes run 8 to 28 (TLFA…VVFA) and 41 to 61 (FSGV…NSFV).

Belongs to the PsbZ family. In terms of assembly, PSII is composed of 1 copy each of membrane proteins PsbA, PsbB, PsbC, PsbD, PsbE, PsbF, PsbH, PsbI, PsbJ, PsbK, PsbL, PsbM, PsbT, PsbY, PsbZ, Psb30/Ycf12, at least 3 peripheral proteins of the oxygen-evolving complex and a large number of cofactors. It forms dimeric complexes.

It is found in the plastid. The protein resides in the chloroplast thylakoid membrane. May control the interaction of photosystem II (PSII) cores with the light-harvesting antenna, regulates electron flow through the 2 photosystem reaction centers. PSII is a light-driven water plastoquinone oxidoreductase, using light energy to abstract electrons from H(2)O, generating a proton gradient subsequently used for ATP formation. The sequence is that of Photosystem II reaction center protein Z from Oltmannsiellopsis viridis (Marine flagellate).